The primary structure comprises 217 residues: ATP phosphoribosyltransferase (217 aa).

Belongs to the ATP phosphoribosyltransferase family. Short subfamily. Heteromultimer composed of HisG and HisZ subunits.

The protein resides in the cytoplasm. It catalyses the reaction 1-(5-phospho-beta-D-ribosyl)-ATP + diphosphate = 5-phospho-alpha-D-ribose 1-diphosphate + ATP. It functions in the pathway amino-acid biosynthesis; L-histidine biosynthesis; L-histidine from 5-phospho-alpha-D-ribose 1-diphosphate: step 1/9. In terms of biological role, catalyzes the condensation of ATP and 5-phosphoribose 1-diphosphate to form N'-(5'-phosphoribosyl)-ATP (PR-ATP). Has a crucial role in the pathway because the rate of histidine biosynthesis seems to be controlled primarily by regulation of HisG enzymatic activity. The sequence is that of ATP phosphoribosyltransferase from Prochlorococcus marinus (strain MIT 9313).